We begin with the raw amino-acid sequence, 486 residues long: Cysteine--tRNA ligase (486 aa).

Residue C29 participates in Zn(2+) binding. The short motif at 31 to 41 (VTVYDYCHLGH) is the 'HIGH' region element. The Zn(2+) site is built by C217, H242, and E246. A 'KMSKS' region motif is present at residues 274–278 (KMSKS). Position 277 (K277) interacts with ATP.

It belongs to the class-I aminoacyl-tRNA synthetase family. In terms of assembly, monomer. Requires Zn(2+) as cofactor.

It is found in the cytoplasm. It catalyses the reaction tRNA(Cys) + L-cysteine + ATP = L-cysteinyl-tRNA(Cys) + AMP + diphosphate. This Thermosynechococcus vestitus (strain NIES-2133 / IAM M-273 / BP-1) protein is Cysteine--tRNA ligase.